The primary structure comprises 121 residues: Large ribosomal subunit protein bL20 (121 aa).

Belongs to the bacterial ribosomal protein bL20 family.

Binds directly to 23S ribosomal RNA and is necessary for the in vitro assembly process of the 50S ribosomal subunit. It is not involved in the protein synthesizing functions of that subunit. This chain is Large ribosomal subunit protein bL20, found in Sphingopyxis alaskensis (strain DSM 13593 / LMG 18877 / RB2256) (Sphingomonas alaskensis).